We begin with the raw amino-acid sequence, 346 residues long: Holliday junction branch migration complex subunit RuvB (346 aa).

The tract at residues 1 to 183 (MTEQRIIASS…FGIVQRLEFY (183 aa)) is large ATPase domain (RuvB-L). ATP contacts are provided by residues isoleucine 22, arginine 23, glycine 64, lysine 67, threonine 68, threonine 69, 130-132 (EDF), arginine 173, tyrosine 183, and arginine 220. Threonine 68 is a binding site for Mg(2+). The small ATPAse domain (RuvB-S) stretch occupies residues 184-254 (SPQELTRIVI…VAQAAMQMLK (71 aa)). Positions 257 to 346 (PEGFDELDRR…PGIGEPGDLF (90 aa)) are head domain (RuvB-H). Residues arginine 293, arginine 312, and arginine 317 each contribute to the DNA site.

Belongs to the RuvB family. In terms of assembly, homohexamer. Forms an RuvA(8)-RuvB(12)-Holliday junction (HJ) complex. HJ DNA is sandwiched between 2 RuvA tetramers; dsDNA enters through RuvA and exits via RuvB. An RuvB hexamer assembles on each DNA strand where it exits the tetramer. Each RuvB hexamer is contacted by two RuvA subunits (via domain III) on 2 adjacent RuvB subunits; this complex drives branch migration. In the full resolvosome a probable DNA-RuvA(4)-RuvB(12)-RuvC(2) complex forms which resolves the HJ.

It is found in the cytoplasm. It carries out the reaction ATP + H2O = ADP + phosphate + H(+). Its function is as follows. The RuvA-RuvB-RuvC complex processes Holliday junction (HJ) DNA during genetic recombination and DNA repair, while the RuvA-RuvB complex plays an important role in the rescue of blocked DNA replication forks via replication fork reversal (RFR). RuvA specifically binds to HJ cruciform DNA, conferring on it an open structure. The RuvB hexamer acts as an ATP-dependent pump, pulling dsDNA into and through the RuvAB complex. RuvB forms 2 homohexamers on either side of HJ DNA bound by 1 or 2 RuvA tetramers; 4 subunits per hexamer contact DNA at a time. Coordinated motions by a converter formed by DNA-disengaged RuvB subunits stimulates ATP hydrolysis and nucleotide exchange. Immobilization of the converter enables RuvB to convert the ATP-contained energy into a lever motion, pulling 2 nucleotides of DNA out of the RuvA tetramer per ATP hydrolyzed, thus driving DNA branch migration. The RuvB motors rotate together with the DNA substrate, which together with the progressing nucleotide cycle form the mechanistic basis for DNA recombination by continuous HJ branch migration. Branch migration allows RuvC to scan DNA until it finds its consensus sequence, where it cleaves and resolves cruciform DNA. The chain is Holliday junction branch migration complex subunit RuvB from Xanthomonas axonopodis pv. citri (strain 306).